The primary structure comprises 148 residues: EKC/KEOPS complex subunit Lage3 (148 aa).

The disordered stretch occupies residues 1-21 (MQTAHTGLSHTADGADGQTSR).

This sequence belongs to the CTAG/PCC1 family. As to quaternary structure, component of the EKC/KEOPS complex composed of at least GON7, TP53RK, TPRKB, OSGEP and LAGE3; the whole complex dimerizes.

Its subcellular location is the cytoplasm. It is found in the nucleus. Component of the EKC/KEOPS complex that is required for the formation of a threonylcarbamoyl group on adenosine at position 37 (t(6)A37) in tRNAs that read codons beginning with adenine. The complex is probably involved in the transfer of the threonylcarbamoyl moiety of threonylcarbamoyl-AMP (TC-AMP) to the N6 group of A37. LAGE3 functions as a dimerization module for the complex. In Mus musculus (Mouse), this protein is EKC/KEOPS complex subunit Lage3.